A 106-amino-acid chain; its full sequence is ATP-dependent Clp protease adapter protein ClpS (106 aa).

Belongs to the ClpS family. In terms of assembly, binds to the N-terminal domain of the chaperone ClpA.

Functionally, involved in the modulation of the specificity of the ClpAP-mediated ATP-dependent protein degradation. In Vibrio campbellii (strain ATCC BAA-1116), this protein is ATP-dependent Clp protease adapter protein ClpS.